The following is a 219-amino-acid chain: Translation initiation factor IF-3 (219 aa).

The protein belongs to the IF-3 family. Monomer.

The protein localises to the cytoplasm. IF-3 binds to the 30S ribosomal subunit and shifts the equilibrium between 70S ribosomes and their 50S and 30S subunits in favor of the free subunits, thus enhancing the availability of 30S subunits on which protein synthesis initiation begins. This Prochlorococcus marinus (strain MIT 9313) protein is Translation initiation factor IF-3.